Consider the following 276-residue polypeptide: Undecaprenyl-diphosphatase 1 (276 aa).

8 helical membrane-spanning segments follow: residues 1–21 (MSLW…LFPV), 44–64 (QLLP…LWYF), 87–107 (GHLM…GLLL), 114–134 (VFHD…LLWL), 150–170 (LTFK…IPGF), 190–210 (AAEF…LLEL), 222–242 (DALL…RFLM), and 251–271 (LASF…WFMF).

The protein belongs to the UppP family.

The protein resides in the cell inner membrane. The catalysed reaction is di-trans,octa-cis-undecaprenyl diphosphate + H2O = di-trans,octa-cis-undecaprenyl phosphate + phosphate + H(+). Catalyzes the dephosphorylation of undecaprenyl diphosphate (UPP). Confers resistance to bacitracin. This Burkholderia pseudomallei (strain 1106a) protein is Undecaprenyl-diphosphatase 1.